We begin with the raw amino-acid sequence, 475 residues long: Ammonium transporter Rh type C (475 aa).

Over 1–20 (MGCVQSFRNFCDRPKNTNVR) the chain is Cytoplasmic. A helical transmembrane segment spans residues 21 to 41 (ISLPAVCFVWQIAMIILFGVF). The Extracellular portion of the chain corresponds to 42–73 (IRYNEEADTHWVEYRKKENISSDIENDFYFRY). Asn-60 carries an N-linked (GlcNAc...) asparagine glycan. A helical transmembrane segment spans residues 74–94 (PSFQDVHVMIFVGFGFLMTFL). At 95–98 (KRYS) the chain is on the cytoplasmic side. Residues 99–119 (FGAVGFNFLIAAFGLQWALLM) form a helical membrane-spanning segment. The Extracellular segment spans residues 120-138 (QGWFHSLDYTDGKIKIGIE). A helical transmembrane segment spans residues 139–159 (NLINADFCVAGCLIAYGAVLG). Topologically, residues 160–167 (KVSPVQLM) are cytoplasmic. Residues 168 to 188 (VLTLFGITLFAVEEYIILNLI) form a helical membrane-spanning segment. Residues 189–193 (HARDA) lie on the Extracellular side of the membrane. Residues 194–214 (GGSMVIHTFGGYYGLSISWML) traverse the membrane as a helical segment. Residues 215 to 233 (YRPNLEQSSNLQGSVYQSD) lie on the Cytoplasmic side of the membrane. A helical membrane pass occupies residues 234–254 (VFAMIGTLFLWMFWPSFNSAI). The Extracellular portion of the chain corresponds to 255 to 265 (TDHGDGQHRAA). The helical transmembrane segment at 266-286 (INTYLALASTVLTTVAISSLF) threads the bilayer. Residues 287 to 299 (QKHGKLDMVHIQN) lie on the Cytoplasmic side of the membrane. The chain crosses the membrane as a helical span at residues 300-320 (STLAGGVAVGTAAEFMLMPYG). A topological domain (extracellular) is located at residue Ser-321. A helical membrane pass occupies residues 322–342 (LIVGFCCGIISTLGYIYLTPF). The Cytoplasmic segment spans residues 343–357 (MEKYLKIQDTCGIHN). A helical transmembrane segment spans residues 358 to 378 (LHAMPGLIGGIVGAITAAAAT). Residues 379-410 (ESVYGKEGLVNTFDFVGPFKNMVPTTQGGHQA) are Extracellular-facing. Residues 411-431 (AGLCVAICFGIGGGIMVGCIL) form a helical membrane-spanning segment. The Cytoplasmic segment spans residues 432-475 (RLPIWCDPADDNCFNDEPYWELPEEEEIIPPILHYNNHMVNKDV).

This sequence belongs to the ammonium transporter (TC 2.A.49) family. Rh subfamily. Homotrimer.

It is found in the apical cell membrane. Functionally, functions as an ammonia transporter. May play a role in the elimination of ammonia in the gill. This Tetraodon nigroviridis (Spotted green pufferfish) protein is Ammonium transporter Rh type C (rhcg).